Here is a 322-residue protein sequence, read N- to C-terminus: Cytochrome f (322 aa).

Positions 1–35 are cleaved as a signal peptide; it reads MQTRNTFSWTWIREEITRSISVSLMIYIITWSSIS. 4 residues coordinate heme: Tyr-38, Cys-58, Cys-61, and His-62. The chain crosses the membrane as a helical span at residues 288–308; sequence VQGLLFFLGSVVLAQIFLVLK.

This sequence belongs to the cytochrome f family. In terms of assembly, the 4 large subunits of the cytochrome b6-f complex are cytochrome b6, subunit IV (17 kDa polypeptide, petD), cytochrome f and the Rieske protein, while the 4 small subunits are PetG, PetL, PetM and PetN. The complex functions as a dimer. Requires heme as cofactor.

It is found in the plastid. The protein resides in the chloroplast thylakoid membrane. Functionally, component of the cytochrome b6-f complex, which mediates electron transfer between photosystem II (PSII) and photosystem I (PSI), cyclic electron flow around PSI, and state transitions. In Aethionema cordifolium (Lebanon stonecress), this protein is Cytochrome f.